Here is a 155-residue protein sequence, read N- to C-terminus: Ribosome maturation factor RimP (155 aa).

The protein belongs to the RimP family.

The protein resides in the cytoplasm. Its function is as follows. Required for maturation of 30S ribosomal subunits. The chain is Ribosome maturation factor RimP from Maridesulfovibrio salexigens (strain ATCC 14822 / DSM 2638 / NCIMB 8403 / VKM B-1763) (Desulfovibrio salexigens).